The sequence spans 300 residues: MDFLMSGVAACGACVFTNPLEVVKTRMQLQGELQAPGTYQRHYRNVFHAFFTIGKVDGLAALQKGLGPALLYQFLMNGIRLGTYGLAESRGYLHTNEGTHSPVRSAAAGALAGVMGAYLGSPIYMVKTHLQAQAASEIAVGHQYKHQGMFQALTEIGQKHGLVGLWRGAVGGLPRVVIGSSTQLCTFSSIKDLLSQWEIFPPQSWKVALAAAMVSGVAIVVAMTPFDVASTRLYNQPTDTRGKGLMYRGILDALLQTARTEGFFGMYKGIGASYFRLGPHTILSLFFWDQLRSFYNTYAK.

3 Solcar repeats span residues 1–90, 100–193, and 203–294; these read MDFL…AESR, HSPV…IKDL, and QSWK…LRSF. A run of 6 helical transmembrane segments spans residues 38–58, 59–79, 91–119, 169–190, 205–225, and 277–300; these read TYQR…KVDG, LAAL…MNGI, GYLH…GAYL, AVGG…FSSI, WKVA…AMTP, and LGPH…TYAK.

It belongs to the mitochondrial carrier (TC 2.A.29) family.

The protein localises to the mitochondrion inner membrane. The enzyme catalyses a dicarboxylate(in) + sulfate(out) = a dicarboxylate(out) + sulfate(in). In terms of biological role, putative antiporter that exchanges dicarboxylates and sulfur oxoanions across the inner membrane of mitochondria. The sequence is that of Solute carrier family 25 member 35 (Slc25a35) from Mus musculus (Mouse).